The primary structure comprises 404 residues: Dihydroorotase (404 aa).

Zn(2+) is bound by residues His57 and His59. Residues His59–Arg61 and Asn91 contribute to the substrate site. Positions 135, 164, 204, and 272 each coordinate Zn(2+). Position 135 is an N6-carboxylysine (Lys135). Residue Asp272 is part of the active site. Substrate contacts are provided by residues His276 and Ala286 to Gly287.

This sequence belongs to the metallo-dependent hydrolases superfamily. DHOase family. Class I DHOase subfamily. Zn(2+) serves as cofactor.

It carries out the reaction (S)-dihydroorotate + H2O = N-carbamoyl-L-aspartate + H(+). It participates in pyrimidine metabolism; UMP biosynthesis via de novo pathway; (S)-dihydroorotate from bicarbonate: step 3/3. Its function is as follows. Catalyzes the reversible cyclization of carbamoyl aspartate to dihydroorotate. The polypeptide is Dihydroorotase (Pyrococcus abyssi (strain GE5 / Orsay)).